The primary structure comprises 500 residues: Polyenoic fatty acid isomerase (500 aa).

An N-terminal signal peptide occupies residues 1–21 (MSLNRVLHIFLIAYLACTALT).

Homodimer. Requires an oxidized flavin as cofactor. Glycosylated.

The catalysed reaction is (5Z,8Z,11Z,14Z,17Z)-eicosapentaenoate = (5Z,7E,9E,14Z,17Z)-icosapentaenoate. Functionally, involved in the biosynthesis of conjugated triene-containing fatty acids. Catalyzes the isomerization of a wide range of substrates containing three or more methylene interrupted olefins into a Z,E,E conjugated triene functionality. May be involved in a stress tolerance mechanism as response to intertidal habitats with direct sunlight, desiccation and high temperature. In vitro substrates include arachidonic acid ((5Z,8Z,11Z,14Z)-eicosatetraenoic acid), EPA ((5Z,8Z, 11Z,14Z,17Z)-eicosapentaenoic acid), DHA ((4Z,7Z,10Z,13Z,16Z,19Z)-docosahexenoic acid), adrenic acid ((7Z,10Z,13Z,16Z)-docosatetraenoic acid), anandamide (arachidonyl-N-ethanolamide) and eicosatrienoic acid ((5Z,8Z,11Z)-eicosatrienoic acid). Gamma-linolenic acid (18:3 6Z,9Z,12Z) and dihomo-gamma-linolenic acid (20:3 8Z,11Z,14Z) are transformed into mixtures of conjugated diene and triene fatty acids, linoleic acid is only transformed to a conjugated diene. This is Polyenoic fatty acid isomerase from Ptilota filicina (Red alga).